We begin with the raw amino-acid sequence, 371 residues long: Queuine tRNA-ribosyltransferase (371 aa).

Aspartate 90 serves as the catalytic Proton acceptor. Substrate contacts are provided by residues 90–94 (DSGGF), aspartate 144, glutamine 188, and glycine 215. The segment at 246 to 252 (GVGTPED) is RNA binding. Aspartate 265 acts as the Nucleophile in catalysis. Residues 270 to 274 (TRNAR) are RNA binding; important for wobble base 34 recognition. Cysteine 303, cysteine 305, cysteine 308, and histidine 334 together coordinate Zn(2+).

Belongs to the queuine tRNA-ribosyltransferase family. Homodimer. Within each dimer, one monomer is responsible for RNA recognition and catalysis, while the other monomer binds to the replacement base PreQ1. Zn(2+) is required as a cofactor.

The catalysed reaction is 7-aminomethyl-7-carbaguanine + guanosine(34) in tRNA = 7-aminomethyl-7-carbaguanosine(34) in tRNA + guanine. It functions in the pathway tRNA modification; tRNA-queuosine biosynthesis. Catalyzes the base-exchange of a guanine (G) residue with the queuine precursor 7-aminomethyl-7-deazaguanine (PreQ1) at position 34 (anticodon wobble position) in tRNAs with GU(N) anticodons (tRNA-Asp, -Asn, -His and -Tyr). Catalysis occurs through a double-displacement mechanism. The nucleophile active site attacks the C1' of nucleotide 34 to detach the guanine base from the RNA, forming a covalent enzyme-RNA intermediate. The proton acceptor active site deprotonates the incoming PreQ1, allowing a nucleophilic attack on the C1' of the ribose to form the product. After dissociation, two additional enzymatic reactions on the tRNA convert PreQ1 to queuine (Q), resulting in the hypermodified nucleoside queuosine (7-(((4,5-cis-dihydroxy-2-cyclopenten-1-yl)amino)methyl)-7-deazaguanosine). This is Queuine tRNA-ribosyltransferase from Neisseria meningitidis serogroup B (strain ATCC BAA-335 / MC58).